We begin with the raw amino-acid sequence, 617 residues long: Alkaline/neutral invertase E, chloroplastic (617 aa).

The transit peptide at Met1–Arg45 directs the protein to the chloroplast. Residue Ser87 is modified to Phosphoserine.

The protein belongs to the glycosyl hydrolase 100 family. Expressed in roots, leaves and flowers.

The protein resides in the plastid. It is found in the chloroplast. It catalyses the reaction Hydrolysis of terminal non-reducing beta-D-fructofuranoside residues in beta-D-fructofuranosides.. Chloroplastic invertase that cleaves sucrose into glucose and fructose and is associated with the development of the photosynthetic apparatus and the assimilation of nitrogen in seedlings to control the sucrose to hexose ratio. Participates in the carbon flux between the cytosol and plastids in leaves. In Arabidopsis thaliana (Mouse-ear cress), this protein is Alkaline/neutral invertase E, chloroplastic.